Here is a 413-residue protein sequence, read N- to C-terminus: F-box protein CPR1 (413 aa).

Residues 1–48 form the F-box domain; it reads MATIPMDIVNDIFLRLPAKTLVRCRALSKPCYHLINDPDFIESHLHRV.

In terms of assembly, part of a SCF (ASK-cullin-F-box) protein ligase complex. Interacts with SKP1A/ASK1, SPK1B/ASK2, ASK9, ASK10, ASK11, ASK13, ASK14, ASK16, ASK17, ASK18 and ASK19. Interacts with TRAF1B. Expressed in seedling, root, stem, leaves, inflorescence and silique, especially in veins and trichomes.

The protein resides in the cytoplasm. The protein localises to the nucleus. It participates in protein modification; protein ubiquitination. Functionally, component of SCF(ASK-cullin-F-box) E3 ubiquitin ligase complexes, which may mediate the ubiquitination and subsequent proteasomal degradation of target proteins. Regulates negatively both salicylic acid (SA)-dependent and SA-independent defense signaling. The sequence is that of F-box protein CPR1 (CPR1) from Arabidopsis thaliana (Mouse-ear cress).